The following is a 305-amino-acid chain: tRNA dimethylallyltransferase (305 aa).

8–15 contributes to the ATP binding site; sequence GPTAVGKT. 10–15 provides a ligand contact to substrate; sequence TAVGKT. Positions 33–36 are interaction with substrate tRNA; sequence DSRQ.

The protein belongs to the IPP transferase family. Monomer. It depends on Mg(2+) as a cofactor.

It catalyses the reaction adenosine(37) in tRNA + dimethylallyl diphosphate = N(6)-dimethylallyladenosine(37) in tRNA + diphosphate. Functionally, catalyzes the transfer of a dimethylallyl group onto the adenine at position 37 in tRNAs that read codons beginning with uridine, leading to the formation of N6-(dimethylallyl)adenosine (i(6)A). The protein is tRNA dimethylallyltransferase of Thermotoga sp. (strain RQ2).